A 347-amino-acid polypeptide reads, in one-letter code: GMP reductase (347 aa).

108–131 (ADFQKTKDIMALTDDLIFICIDIA) serves as a coordination point for NADP(+). Residues glycine 181 and glycine 183 each coordinate K(+). Cysteine 186 (thioimidate intermediate) is an active-site residue. 216 to 239 (IIGDGGCSCAGDVSKAFGGGADFV) serves as a coordination point for NADP(+).

Belongs to the IMPDH/GMPR family. GuaC type 1 subfamily. Homotetramer.

The enzyme catalyses IMP + NH4(+) + NADP(+) = GMP + NADPH + 2 H(+). Functionally, catalyzes the irreversible NADPH-dependent deamination of GMP to IMP. It functions in the conversion of nucleobase, nucleoside and nucleotide derivatives of G to A nucleotides, and in maintaining the intracellular balance of A and G nucleotides. In Aliivibrio fischeri (strain MJ11) (Vibrio fischeri), this protein is GMP reductase.